The chain runs to 464 residues: Asparagine--tRNA ligase (464 aa).

Belongs to the class-II aminoacyl-tRNA synthetase family. As to quaternary structure, homodimer.

The protein localises to the cytoplasm. It catalyses the reaction tRNA(Asn) + L-asparagine + ATP = L-asparaginyl-tRNA(Asn) + AMP + diphosphate + H(+). The polypeptide is Asparagine--tRNA ligase (Xanthomonas euvesicatoria pv. vesicatoria (strain 85-10) (Xanthomonas campestris pv. vesicatoria)).